A 541-amino-acid polypeptide reads, in one-letter code: Thioredoxin reductase (541 aa).

FAD contacts are provided by residues 51–52 (PG), 71–74 (DYVK), 87–88 (TC), 92–96 (GCVPK), alanine 161, aspartate 357, and 364–366 (ELA). A disulfide bond links cysteine 88 and cysteine 93. Residues 438 to 452 (HRQKHIRAQKDEYDL) are loop important for the interaction with TRX1. Histidine 509 serves as a coordination point for FAD. The active-site Proton acceptor is histidine 509. Cysteines 535 and 540 form a disulfide.

This sequence belongs to the class-I pyridine nucleotide-disulfide oxidoreductase family. Homodimer. It depends on FAD as a cofactor.

The protein localises to the cytoplasm. It carries out the reaction [thioredoxin]-dithiol + NADP(+) = [thioredoxin]-disulfide + NADPH + H(+). Functionally, catalyzes the transfer of electrons from NADPH to thioredoxins TRX1, TRX2 and TRX3, which in turn act as reductants of disulfide containing proteins. Able to reduce nitroglutathione (GSNO), a compound involved in the transport of nitric oxide (NO); however, TRX1 is more efficient in reducing GSNO. Has no catalytic activity towards oxidized glutathione (GSSG). The polypeptide is Thioredoxin reductase (Plasmodium falciparum (isolate FCH-5)).